The sequence spans 226 residues: Enolase-phosphatase E1 (226 aa).

This sequence belongs to the HAD-like hydrolase superfamily. MasA/MtnC family. Monomer. It depends on Mg(2+) as a cofactor.

It carries out the reaction 5-methylsulfanyl-2,3-dioxopentyl phosphate + H2O = 1,2-dihydroxy-5-(methylsulfanyl)pent-1-en-3-one + phosphate. It participates in amino-acid biosynthesis; L-methionine biosynthesis via salvage pathway; L-methionine from S-methyl-5-thio-alpha-D-ribose 1-phosphate: step 3/6. Its pathway is amino-acid biosynthesis; L-methionine biosynthesis via salvage pathway; L-methionine from S-methyl-5-thio-alpha-D-ribose 1-phosphate: step 4/6. Functionally, bifunctional enzyme that catalyzes the enolization of 2,3-diketo-5-methylthiopentyl-1-phosphate (DK-MTP-1-P) into the intermediate 2-hydroxy-3-keto-5-methylthiopentenyl-1-phosphate (HK-MTPenyl-1-P), which is then dephosphorylated to form the acireductone 1,2-dihydroxy-3-keto-5-methylthiopentene (DHK-MTPene). The protein is Enolase-phosphatase E1 of Shewanella sp. (strain MR-4).